A 31-amino-acid chain; its full sequence is U2-theraphotoxin-Hhn1a (31 aa).

Intrachain disulfides connect cysteine 2–cysteine 14, cysteine 7–cysteine 19, and cysteine 13–cysteine 26.

In terms of tissue distribution, expressed by the venom gland.

The protein localises to the secreted. Agglutinates erythrocytes. In Cyriopagopus hainanus (Chinese bird spider), this protein is U2-theraphotoxin-Hhn1a.